A 356-amino-acid chain; its full sequence is D-alanine--D-alanine ligase (356 aa).

The ATP-grasp domain occupies 134 to 339 (KQLFEHRGLP…YSDLITKLID (206 aa)). An ATP-binding site is contributed by 167-222 (KDKLTYPVFVKPANLGSSVGISKCNNEDELKSGIEEAFQFDRKLVIEQGINAREVE). Mg(2+) is bound by residues Asp-293, Glu-306, and Asn-308.

Belongs to the D-alanine--D-alanine ligase family. The cofactor is Mg(2+). It depends on Mn(2+) as a cofactor.

It localises to the cytoplasm. The catalysed reaction is 2 D-alanine + ATP = D-alanyl-D-alanine + ADP + phosphate + H(+). Its pathway is cell wall biogenesis; peptidoglycan biosynthesis. Its function is as follows. Cell wall formation. The sequence is that of D-alanine--D-alanine ligase from Staphylococcus haemolyticus (strain JCSC1435).